We begin with the raw amino-acid sequence, 446 residues long: MILLPQEIIRNKRDGKTLSRQEIDFFIKGITDNSVTEGQIAAFAMAVYFQDMNMDERVLLVSAMRDSGQVINWQSLNLNGPVVDKHSTGGVGDVTSLILGPMVAACGGYVPMISGRGLGHTGGTLDKLDAISGYKTTPDSLDHFRKIVKEVGVAIIGQTGDLAPADKRFYATRDITATVESIPLITASILSKKLAAGIDALVMDVKAGSGAFMPTFEQSEALANSIVGVANGAGCKTSALITNMDQVLASSAGNAVEVREAVRFLKGEVVNPRLHEVTMALCAEMLLLSGLAADIKEAQAKLQKVLDNGKAAEVFAKMVGALGGPADFIENQDNYLQKSAIVRPVYAQHSGIVQSMDTRALGMAVVNLGGGRHSASDSIDYAVGLSGILSLGESADSEKPLAMIHAQSEKQFSEAQRAIQSAIICGTDSLQAQTQVYRHIRLPDIS.

It belongs to the thymidine/pyrimidine-nucleoside phosphorylase family. As to quaternary structure, homodimer.

It carries out the reaction thymidine + phosphate = 2-deoxy-alpha-D-ribose 1-phosphate + thymine. It functions in the pathway pyrimidine metabolism; dTMP biosynthesis via salvage pathway; dTMP from thymine: step 1/2. Functionally, the enzymes which catalyze the reversible phosphorolysis of pyrimidine nucleosides are involved in the degradation of these compounds and in their utilization as carbon and energy sources, or in the rescue of pyrimidine bases for nucleotide synthesis. The chain is Thymidine phosphorylase from Psychromonas ingrahamii (strain DSM 17664 / CCUG 51855 / 37).